The sequence spans 394 residues: Actin-related protein 2 (394 aa).

Residue M1 is modified to N-acetylmethionine. ATP-binding positions include 160–162 (GDG) and 214–218 (RMIKE). K299 bears the N6-acetyllysine mark. Position 305–310 (305–310 (GGSTMY)) interacts with ATP. Position 322 is an N6-acetyllysine (K322).

The protein belongs to the actin family. ARP2 subfamily. In terms of assembly, component of the Arp2/3 complex composed of ACTR2/ARP2, ACTR3/ARP3, ARPC1B/p41-ARC, ARPC2/p34-ARC, ARPC3/p21-ARC, ARPC4/p20-ARC and ARPC5/p16-ARC. Interacts with AVIL.

It is found in the cytoplasm. The protein localises to the cytoskeleton. Its subcellular location is the cell projection. The protein resides in the nucleus. In terms of biological role, ATP-binding component of the Arp2/3 complex, a multiprotein complex that mediates actin polymerization upon stimulation by nucleation-promoting factor (NPF). The Arp2/3 complex mediates the formation of branched actin networks in the cytoplasm, providing the force for cell motility. Seems to contact the pointed end of the daughter actin filament. In podocytes, required for the formation of lamellipodia downstream of AVIL and PLCE1 regulation. In addition to its role in the cytoplasmic cytoskeleton, the Arp2/3 complex also promotes actin polymerization in the nucleus, thereby regulating gene transcription and repair of damaged DNA. The Arp2/3 complex promotes homologous recombination (HR) repair in response to DNA damage by promoting nuclear actin polymerization, leading to drive motility of double-strand breaks (DSBs). The protein is Actin-related protein 2 (ACTR2) of Bos taurus (Bovine).